A 349-amino-acid chain; its full sequence is MNQEELFDVTVIGGGPAGLYSAFYSGLREMKTKIIEFQPQLGGKIHVYPEKMIWDIGGLLPVTGEKLIEQLVQQGLTFQPEVVLNTKIESIIRNQDGIFTLKTSSGEEHFSKTVIVATGSGILNPQKLSIEGAERFEVSNLNYTVKSLKRFKDKTVIISGGGNSAIDWANELEPIAKKVYLTYRKEELSGHEAQVKQLMNSSAECFFNTSITKLIAGDNHEAIEYVELTNHETGEVSHLSIDEVIINHGYERDITLLENSELDVAIVDNYYIAGNANSESSVDGLYAAGDILKHDGKLHLIAGAFQDAGNAVNKAKQFIQPDASEYGMVSSHNEVFKKRNRELIKQMMK.

The FAD site is built by Glu-36, Lys-44, Tyr-48, Ile-88, Leu-123, Asp-290, and Ser-331.

It belongs to the ferredoxin--NADP reductase type 2 family. In terms of assembly, homodimer. FAD serves as cofactor.

It catalyses the reaction 2 reduced [2Fe-2S]-[ferredoxin] + NADP(+) + H(+) = 2 oxidized [2Fe-2S]-[ferredoxin] + NADPH. In Bacillus mycoides (strain KBAB4) (Bacillus weihenstephanensis), this protein is Ferredoxin--NADP reductase 1.